The sequence spans 156 residues: Ribosomal RNA large subunit methyltransferase H (156 aa).

Residues leucine 73, glycine 104, and 123–128 contribute to the S-adenosyl-L-methionine site; that span reads LSALTL.

It belongs to the RNA methyltransferase RlmH family. As to quaternary structure, homodimer.

The protein resides in the cytoplasm. The enzyme catalyses pseudouridine(1915) in 23S rRNA + S-adenosyl-L-methionine = N(3)-methylpseudouridine(1915) in 23S rRNA + S-adenosyl-L-homocysteine + H(+). Its function is as follows. Specifically methylates the pseudouridine at position 1915 (m3Psi1915) in 23S rRNA. The polypeptide is Ribosomal RNA large subunit methyltransferase H (Vibrio vulnificus (strain CMCP6)).